We begin with the raw amino-acid sequence, 339 residues long: Serpentine receptor class alpha-24 (339 aa).

7 consecutive transmembrane segments (helical) span residues 26–46 (ITVKMSSVLVVTVILLSYYFA), 65–82 (LILLVCLLNSIIHQTTML), 112–132 (ELFVYYLTTYFSTYSVFSLAF), 151–171 (VSIFLLFIQLIFTLGTYYVGL), 199–219 (FRTLIMGICIIVTVFVYYLSV), 248–268 (VCILIVLQFACILISSLGVNY), and 284–304 (LAPFFVGVTYANLCLPLVIHC).

The protein belongs to the nematode receptor-like protein sra family.

It is found in the membrane. The polypeptide is Serpentine receptor class alpha-24 (sra-24) (Caenorhabditis elegans).